The following is a 93-amino-acid chain: MTKSELIERLTLKHELPPKQVEASVKEILEQMVQSLSQGKRVEIRGFGSFSLHYRAPRVGRNPKTGDPVELDGKYVPHFKAGKELRERVDTLS.

Belongs to the bacterial histone-like protein family. Heterodimer of an alpha and a beta chain.

This protein is one of the two subunits of integration host factor, a specific DNA-binding protein that functions in genetic recombination as well as in transcriptional and translational control. This is Integration host factor subunit beta from Idiomarina loihiensis (strain ATCC BAA-735 / DSM 15497 / L2-TR).